Consider the following 444-residue polypeptide: Tol-Pal system protein TolB (444 aa).

Positions Met-1 to Ala-19 are cleaved as a signal peptide.

This sequence belongs to the TolB family. In terms of assembly, the Tol-Pal system is composed of five core proteins: the inner membrane proteins TolA, TolQ and TolR, the periplasmic protein TolB and the outer membrane protein Pal. They form a network linking the inner and outer membranes and the peptidoglycan layer.

The protein localises to the periplasm. Functionally, part of the Tol-Pal system, which plays a role in outer membrane invagination during cell division and is important for maintaining outer membrane integrity. This is Tol-Pal system protein TolB from Rickettsia massiliae (strain Mtu5).